Here is a 652-residue protein sequence, read N- to C-terminus: Bifunctional protein ThiO/ThiG (652 aa).

Residues Met-1–Ser-366 are thiO. Residues Ile-5 to Val-19 and Ala-44 to Met-46 each bind FAD. A glycine-binding site is contributed by Glu-52. Position 173 (Val-173) interacts with FAD. Glycine-binding residues include Arg-301 and Arg-327. His-325–Leu-331 contributes to the FAD binding site. A thiG region spans residues Pro-393–Ser-652. Lys-494 (schiff-base intermediate with DXP) is an active-site residue. 1-deoxy-D-xylulose 5-phosphate-binding positions include Gly-555, Ala-581 to Gly-582, and Asn-603 to Ser-604.

It in the N-terminal section; belongs to the DAO family. ThiO subfamily. This sequence in the C-terminal section; belongs to the ThiG family. As to quaternary structure, interacts with ThiH and ThiS. Requires FAD as cofactor.

It is found in the cytoplasm. The catalysed reaction is glycine + O2 + H2O = glyoxylate + H2O2 + NH4(+). It carries out the reaction [ThiS sulfur-carrier protein]-C-terminal-Gly-aminoethanethioate + 2-iminoacetate + 1-deoxy-D-xylulose 5-phosphate = [ThiS sulfur-carrier protein]-C-terminal Gly-Gly + 2-[(2R,5Z)-2-carboxy-4-methylthiazol-5(2H)-ylidene]ethyl phosphate + 2 H2O + H(+). Its pathway is cofactor biosynthesis; thiamine diphosphate biosynthesis. Functionally, catalyzes the FAD-dependent oxidative deamination of glycine. Is essential for thiamine biosynthesis since the oxidation of glycine catalyzed by ThiO generates the glycine imine intermediate (dehydroglycine) required for the biosynthesis of the thiazole ring of thiamine pyrophosphate. In terms of biological role, catalyzes the rearrangement of 1-deoxy-D-xylulose 5-phosphate (DXP) to produce the thiazole phosphate moiety of thiamine. Sulfur is provided by the thiocarboxylate moiety of the carrier protein ThiS. In vitro, sulfur can be provided by H(2)S. The sequence is that of Bifunctional protein ThiO/ThiG (thiO/thiG) from Nostoc sp. (strain PCC 7120 / SAG 25.82 / UTEX 2576).